The primary structure comprises 196 residues: Large ribosomal subunit protein uL18 (196 aa).

It belongs to the universal ribosomal protein uL18 family. Part of the 50S ribosomal subunit. Contacts the 5S and 23S rRNAs.

In terms of biological role, this is one of the proteins that bind and probably mediate the attachment of the 5S RNA into the large ribosomal subunit, where it forms part of the central protuberance. The sequence is that of Large ribosomal subunit protein uL18 from Thermofilum pendens (strain DSM 2475 / Hrk 5).